The primary structure comprises 361 residues: tRNA-specific 2-thiouridylase MnmA (361 aa).

ATP contacts are provided by residues 11-18 and Met37; that span reads GMSGGVDS. The segment at 97–99 is interaction with target base in tRNA; it reads NPD. Cys102 acts as the Nucleophile in catalysis. Cys102 and Cys199 form a disulfide bridge. Position 126 (Gly126) interacts with ATP. Residues 149 to 151 form an interaction with tRNA region; that stretch reads KDQ. Residue Cys199 is the Cysteine persulfide intermediate of the active site. The interval 311 to 312 is interaction with tRNA; the sequence is RY.

Belongs to the MnmA/TRMU family.

It is found in the cytoplasm. It carries out the reaction S-sulfanyl-L-cysteinyl-[protein] + uridine(34) in tRNA + AH2 + ATP = 2-thiouridine(34) in tRNA + L-cysteinyl-[protein] + A + AMP + diphosphate + H(+). Functionally, catalyzes the 2-thiolation of uridine at the wobble position (U34) of tRNA, leading to the formation of s(2)U34. In Cupriavidus necator (strain ATCC 17699 / DSM 428 / KCTC 22496 / NCIMB 10442 / H16 / Stanier 337) (Ralstonia eutropha), this protein is tRNA-specific 2-thiouridylase MnmA.